Reading from the N-terminus, the 514-residue chain is MKKLKINYLFIGILTLLLAAALWPSIPWFGKTENHVAAIQARGVLRVSTIDSPLTYAVVNGKKYGLDYELAQQFANYLGVKLKITVRQNISQLFDDLDNGNADLLAAGLVYDSARVKKYQPGPMYYSVSQQLVYRVGQYRPRSLATVTENQLTIAPGHVVVNDLQRLKETKFPDLSWKVDDKKGSTTLLEDVINGKLDYTIADSVAISLFQRVHPELAVALDVTDEQPVTWFSRLDDDNTLSAALLDFFNSINEDGSLARIEEKYLGHGDDFDYVDTRSFLRAVDNVLPELEALFKKYAKEIDWRLLAAISYQESHWDPQATSPTGVRGLMMLTKNTAQSLGLTDRTDAEQSISGGARYLEDMMAKVPETVPEDERIWFALAAYNMGYAHMLDARALTVKTKGNPDSWTDVKQRLPLLSQKPYYSKLTYGYARGHEAYAYVENIRKYQISLVGYLQEKEKQEAEAMKLAQDYPAASPEELNKAPFPFISFLSQSSGYLTHSPSLLFTPQKKEEK.

Positions 1–30 are cleaved as a signal peptide; sequence MKKLKINYLFIGILTLLLAAALWPSIPWFG. The interval 31 to 269 is non-LT domain; sequence KTENHVAAIQ…RIEEKYLGHG (239 aa). The interval 270–514 is LT domain; that stretch reads DDFDYVDTRS…LFTPQKKEEK (245 aa). The active site involves E314.

The protein in the N-terminal section; belongs to the bacterial solute-binding protein 3 family. This sequence in the C-terminal section; belongs to the transglycosylase Slt family.

It is found in the cell outer membrane. The enzyme catalyses Exolytic cleavage of the (1-&gt;4)-beta-glycosidic linkage between N-acetylmuramic acid (MurNAc) and N-acetylglucosamine (GlcNAc) residues in peptidoglycan, from either the reducing or the non-reducing ends of the peptidoglycan chains, with concomitant formation of a 1,6-anhydrobond in the MurNAc residue.. Its function is as follows. Murein-degrading enzyme that degrades murein glycan strands and insoluble, high-molecular weight murein sacculi, with the concomitant formation of a 1,6-anhydromuramoyl product. Lytic transglycosylases (LTs) play an integral role in the metabolism of the peptidoglycan (PG) sacculus. Their lytic action creates space within the PG sacculus to allow for its expansion as well as for the insertion of various structures such as secretion systems and flagella. This Salmonella arizonae (strain ATCC BAA-731 / CDC346-86 / RSK2980) protein is Membrane-bound lytic murein transglycosylase F.